The primary structure comprises 281 residues: Bis(5'-nucleosyl)-tetraphosphatase, symmetrical (281 aa).

The protein belongs to the Ap4A hydrolase family.

The catalysed reaction is P(1),P(4)-bis(5'-adenosyl) tetraphosphate + H2O = 2 ADP + 2 H(+). Functionally, hydrolyzes diadenosine 5',5'''-P1,P4-tetraphosphate to yield ADP. The chain is Bis(5'-nucleosyl)-tetraphosphatase, symmetrical from Pectobacterium atrosepticum (strain SCRI 1043 / ATCC BAA-672) (Erwinia carotovora subsp. atroseptica).